A 452-amino-acid chain; its full sequence is Phosphoglucosamine mutase (452 aa).

Residue Ser88 is the Phosphoserine intermediate of the active site. The Mg(2+) site is built by Ser88, Asp234, Asp236, and Asp238. Ser88 is modified (phosphoserine).

This sequence belongs to the phosphohexose mutase family. Mg(2+) serves as cofactor. Post-translationally, activated by phosphorylation.

The catalysed reaction is alpha-D-glucosamine 1-phosphate = D-glucosamine 6-phosphate. In terms of biological role, catalyzes the conversion of glucosamine-6-phosphate to glucosamine-1-phosphate. This Methanococcus aeolicus (strain ATCC BAA-1280 / DSM 17508 / OCM 812 / Nankai-3) protein is Phosphoglucosamine mutase.